The sequence spans 183 residues: MQTSLRQQILPGLSLILLVLNQVPELQGQEFRFGPCQVTGVVLPELWEAFWTVKNTVKTQDELTSVRLLKPQVLQNVSDAESCYLAHSLLKFYLNTVFKNYHSKIVKFKVLKSFSTLANNFLVIMSKLQPSKDNAMLPISDSARRRFLLYHRTFKQLDIEVALAKAFGEVDILLAWMQNFYQL.

The signal sequence occupies residues methionine 1–glycine 28. A disulfide bond links cysteine 36 and cysteine 83. A glycan (N-linked (GlcNAc...) asparagine) is linked at asparagine 76. Lysine 99 participates in a covalent cross-link: Glycyl lysine isopeptide (Lys-Gly) (interchain with G-Cter in ubiquitin).

Belongs to the IL-10 family. Glycosylated. In terms of processing, ubiquitination at Lys-99 promotes proteasomal degradation.

The protein localises to the secreted. Its function is as follows. Multifunctional cytokine mainly produced by T-cells that plays a regulatory role in immune response, tissue homeostasis, host defense, and oncogenesis. Possesses antiviral functions and induces the type I interferon response during influenza infection. Signals through two receptor complexes IL20RA/IL20RB or IL20RB/IL22RA1. In turn, stimulates the JAK1-STAT3 and MAPK pathways and promotes the secretion of pro-inflammatory mediators including IL8 and MMP1. Intracellularly, maintains endoplasmic reticulum homeostasis by restricting the eIF2alpha-CHOP pathway-mediated stress signal. In addition, acts as a quality control mechanism for the ubiquitin proteasome system by alerting the cell to proteasome dysfunction through activation of PKR/EIF2AK2. The protein is Interleukin-24 (Il24) of Rattus norvegicus (Rat).